Consider the following 118-residue polypeptide: Fluoride-specific ion channel FluC 1 (118 aa).

The next 2 membrane-spanning stretches (helical) occupy residues 1 to 21 (MIQC…RGFV) and 29 to 49 (FNTS…FCIG). 2 residues coordinate Na(+): Gly71 and Thr74. The chain crosses the membrane as a helical span at residues 95–115 (LFILYSILQYGVSFVACLLGY).

The protein belongs to the fluoride channel Fluc/FEX (TC 1.A.43) family.

It is found in the cell membrane. It carries out the reaction fluoride(in) = fluoride(out). Na(+) is not transported, but it plays an essential structural role and its presence is essential for fluoride channel function. Functionally, fluoride-specific ion channel. Important for reducing fluoride concentration in the cell, thus reducing its toxicity. In Staphylococcus saprophyticus subsp. saprophyticus (strain ATCC 15305 / DSM 20229 / NCIMB 8711 / NCTC 7292 / S-41), this protein is Fluoride-specific ion channel FluC 1.